The chain runs to 658 residues: Alkyldihydroxyacetonephosphate synthase, peroxisomal (658 aa).

Positions methionine 1–alanine 24 are enriched in low complexity. A disordered region spans residues methionine 1–arginine 37. The transit peptide at methionine 1 to cysteine 58 directs the protein to the peroxisome. Residues alanine 25 to glycine 35 are compositionally biased toward basic and acidic residues. Serine 65 carries the phosphoserine modification. At threonine 74 the chain carries Phosphothreonine. At lysine 102 the chain carries N6-acetyllysine. The FAD-binding PCMH-type domain maps to phenylalanine 202–threonine 384. FAD is bound by residues proline 234–serine 240, aspartate 303–threonine 309, and threonine 316–serine 319. Lysine 347 carries the post-translational modification N6-acetyllysine. Glutamate 368–isoleucine 374 is a binding site for FAD. Arginine 515 lines the substrate pocket. Tyrosine 578 functions as the Proton donor/acceptor in the catalytic mechanism. Important for enzyme activity regions lie at residues histidine 615 to histidine 617 and asparagine 654 to leucine 658.

Belongs to the FAD-binding oxidoreductase/transferase type 4 family. In terms of assembly, homodimer. FAD is required as a cofactor.

The protein localises to the peroxisome membrane. The protein resides in the peroxisome. It carries out the reaction a long chain fatty alcohol + a 1-acylglycerone 3-phosphate = a 1-O-alkylglycerone 3-phosphate + a long-chain fatty acid + H(+). It catalyses the reaction hexadecan-1-ol + 1-hexadecanoylglycerone 3-phosphate = 1-O-hexadecylglycerone 3-phosphate + hexadecanoate + H(+). The enzyme catalyses 1-hexadecanoylglycerone 3-phosphate + a long-chain fatty acid = a 1-acylglycerone 3-phosphate + hexadecanoate. It participates in glycerolipid metabolism; ether lipid biosynthesis. With respect to regulation, inhibited by N-ethylmaleimide, p-bromophenacylbromide, 2,4- dinitrofluorobenzene and divalent cations such as such as Mn(2+), Mg(2+) and Zn(2+). Inhibition by p-bromophenacylbromide is strongly pH dependent and is highest at alkaline conditions. Catalyzes the exchange of the acyl chain in acyl-dihydroxyacetonephosphate (acyl-DHAP) for a long chain fatty alcohol, yielding the first ether linked intermediate, i.e. alkyl-dihydroxyacetonephosphate (alkyl-DHAP), in the pathway of ether lipid biosynthesis. The chain is Alkyldihydroxyacetonephosphate synthase, peroxisomal (AGPS) from Cavia porcellus (Guinea pig).